The following is a 165-amino-acid chain: uncharacterized protein (165 aa).

2 consecutive transmembrane segments (helical) span residues 7–27 (LWLALVLLILSIPAVSAQITV) and 141–161 (KGTPGFEAFVAVAVIGSIALL).

The protein localises to the cell membrane. This is an uncharacterized protein from Archaeoglobus fulgidus (strain ATCC 49558 / DSM 4304 / JCM 9628 / NBRC 100126 / VC-16).